Here is a 501-residue protein sequence, read N- to C-terminus: Cobyric acid synthase (501 aa).

The GATase cobBQ-type domain maps to 253-450 (EIEIAVLKLP…LHGIFENGRW (198 aa)). Cys334 acts as the Nucleophile in catalysis. Residue His442 is part of the active site.

This sequence belongs to the CobB/CobQ family. CobQ subfamily.

Its pathway is cofactor biosynthesis; adenosylcobalamin biosynthesis. In terms of biological role, catalyzes amidations at positions B, D, E, and G on adenosylcobyrinic A,C-diamide. NH(2) groups are provided by glutamine, and one molecule of ATP is hydrogenolyzed for each amidation. The sequence is that of Cobyric acid synthase from Prochlorococcus marinus (strain MIT 9313).